Consider the following 577-residue polypeptide: Arginine--tRNA ligase (577 aa).

The 'HIGH' region motif lies at 122 to 132 (PNVAKEMHVGH).

The protein belongs to the class-I aminoacyl-tRNA synthetase family. Monomer.

It localises to the cytoplasm. The enzyme catalyses tRNA(Arg) + L-arginine + ATP = L-arginyl-tRNA(Arg) + AMP + diphosphate. This chain is Arginine--tRNA ligase, found in Vibrio parahaemolyticus serotype O3:K6 (strain RIMD 2210633).